Reading from the N-terminus, the 472-residue chain is Probable dipeptidase A (472 aa).

Cys-10 is a catalytic residue.

It belongs to the peptidase C69 family.

The catalysed reaction is an L-aminoacyl-L-amino acid + H2O = 2 an L-alpha-amino acid. The protein is Probable dipeptidase A (pepDA) of Streptococcus pyogenes serotype M18 (strain MGAS8232).